The primary structure comprises 240 residues: Intestine-specific homeobox (240 aa).

A disordered region spans residues 36–82 (PTERRSLPRPQSICKEDSRQTTIPGSKLERPPQDQPQEEKKNKRRVR). Residues 62-76 (KLERPPQDQPQEEKK) are compositionally biased toward basic and acidic residues. Residues 78 to 137 (KRRVRTTFTTEQLQELEKLFHFTHYPDIHVRSQLASRINLPEARVQIWFQNQRAKWRKQE) constitute a DNA-binding region (homeobox).

In terms of tissue distribution, expressed in intestinal epithelial cells from the duodenum to the proximal colon.

The protein localises to the nucleus. Transcription factor that regulates gene expression in intestine. May participate in vitamin A metabolism most likely by regulating BCO1 expression in the intestine. The protein is Intestine-specific homeobox (Isx) of Mus musculus (Mouse).